Consider the following 944-residue polypeptide: Valine--tRNA ligase (944 aa).

The 'HIGH' region motif lies at P43–H53. The short motif at K550–S554 is the 'KMSKS' region element. K553 serves as a coordination point for ATP. Positions L878–L944 form a coiled coil.

This sequence belongs to the class-I aminoacyl-tRNA synthetase family. ValS type 1 subfamily. Monomer.

It localises to the cytoplasm. The enzyme catalyses tRNA(Val) + L-valine + ATP = L-valyl-tRNA(Val) + AMP + diphosphate. Functionally, catalyzes the attachment of valine to tRNA(Val). As ValRS can inadvertently accommodate and process structurally similar amino acids such as threonine, to avoid such errors, it has a 'posttransfer' editing activity that hydrolyzes mischarged Thr-tRNA(Val) in a tRNA-dependent manner. The polypeptide is Valine--tRNA ligase (Xanthomonas campestris pv. campestris (strain B100)).